A 148-amino-acid polypeptide reads, in one-letter code: Large ribosomal subunit protein bL9 (148 aa).

Belongs to the bacterial ribosomal protein bL9 family.

Functionally, binds to the 23S rRNA. The polypeptide is Large ribosomal subunit protein bL9 (Bacillus cereus (strain ATCC 10987 / NRS 248)).